The sequence spans 345 residues: Phosphoribosylformylglycinamidine cyclo-ligase (345 aa).

The protein belongs to the AIR synthase family.

It localises to the cytoplasm. It carries out the reaction 2-formamido-N(1)-(5-O-phospho-beta-D-ribosyl)acetamidine + ATP = 5-amino-1-(5-phospho-beta-D-ribosyl)imidazole + ADP + phosphate + H(+). The protein operates within purine metabolism; IMP biosynthesis via de novo pathway; 5-amino-1-(5-phospho-D-ribosyl)imidazole from N(2)-formyl-N(1)-(5-phospho-D-ribosyl)glycinamide: step 2/2. This is Phosphoribosylformylglycinamidine cyclo-ligase from Pasteurella multocida (strain Pm70).